Reading from the N-terminus, the 1532-residue chain is Glycogen debranching enzyme (1532 aa).

Serine 64 is subject to Phosphoserine. Residues aspartate 526, histidine 529, and aspartate 627 contribute to the active site.

Belongs to the glycogen debranching enzyme family. In terms of assembly, monomer. Interacts with NHLRC1/malin. The N-terminus is blocked. Post-translationally, ubiquitinated. In terms of tissue distribution, liver, kidney and lymphoblastoid cells express predominantly isoform 1; whereas muscle and heart express not only isoform 1, but also muscle-specific isoform mRNAs (isoforms 2, 3 and 4). Isoforms 5 and 6 are present in both liver and muscle.

Its subcellular location is the cytoplasm. The enzyme catalyses Transfers a segment of a (1-&gt;4)-alpha-D-glucan to a new position in an acceptor, which may be glucose or a (1-&gt;4)-alpha-D-glucan.. It catalyses the reaction Hydrolysis of (1-&gt;6)-alpha-D-glucosidic branch linkages in glycogen phosphorylase limit dextrin.. Multifunctional enzyme acting as 1,4-alpha-D-glucan:1,4-alpha-D-glucan 4-alpha-D-glycosyltransferase and amylo-1,6-glucosidase in glycogen degradation. This is Glycogen debranching enzyme (AGL) from Homo sapiens (Human).